The primary structure comprises 52 residues: UPF0181 protein HI_1434.2 (52 aa).

This sequence belongs to the UPF0181 family.

The sequence is that of UPF0181 protein HI_1434.2 from Haemophilus influenzae (strain ATCC 51907 / DSM 11121 / KW20 / Rd).